The chain runs to 282 residues: MAGKHGRNGFEDDDVNPFAGGSVPPANNSRLPPLSHEPADFYNVDIPLDSSKDLKKKEKELQAMEAELNKRERELKRKEEAAAQAGIVIEDKNWPPFFPLIHHNISNEIPIHLQRMQYLAFSSFLGLAACLFWNIIATTTAWVKGEGVIIWLLAIIYFISGVPGAYVLWYRPLYNAMRTESALKFGWFFLFYLIHIIFCVWAAVAPPFPFKGKSLAGILPAIDVIGRSAIVGIFYFVGFGLFCLESLLSIGVIQQVYMYFRGSGKAAEMKREAARGALSSAF.

The interval 1 to 36 (MAGKHGRNGFEDDDVNPFAGGSVPPANNSRLPPLSH) is disordered. The Cytoplasmic portion of the chain corresponds to 1–117 (MAGKHGRNGF…EIPIHLQRMQ (117 aa)). Residues 48–92 (LDSSKDLKKKEKELQAMEAELNKRERELKRKEEAAAQAGIVIEDK) are a coiled coil. A run of 4 helical transmembrane segments spans residues 118-138 (YLAF…IIAT), 148-168 (VIIW…AYVL), 185-205 (FGWF…AAVA), and 230-250 (IVGI…LLSI). Over 251–282 (GVIQQVYMYFRGSGKAAEMKREAARGALSSAF) the chain is Cytoplasmic.

The protein belongs to the SCAMP family.

It localises to the cell membrane. The protein localises to the cytoplasmic vesicle. The protein resides in the secretory vesicle membrane. In terms of biological role, probably involved in membrane trafficking. This chain is Secretory carrier-associated membrane protein 3 (SCAMP3), found in Oryza sativa subsp. japonica (Rice).